The chain runs to 149 residues: Oligosaccharyltransferase complex subunit OSTC (149 aa).

Residues 1-32 (METLYRVPFLVLECPNLKLKKPPWVHMPSAMT) are Cytoplasmic-facing. A helical transmembrane segment spans residues 33–53 (VYALVVVSYFLITGGIIYDVI). Topologically, residues 54–83 (VEPPSVGSMTDEHGHQRPVAFLAYRVNGQY) are extracellular. Residues 84-104 (IMEGLASSFLFTMGGLGFIIL) traverse the membrane as a helical segment. Topologically, residues 105-117 (DRSNAPNIPKLNR) are cytoplasmic. Residues 118–138 (FLLLFIGFVCVLLSFFMARVF) traverse the membrane as a helical segment. Residues 139-149 (MRMKLPGYLMG) lie on the Extracellular side of the membrane.

This sequence belongs to the OSTC family. As to quaternary structure, component of STT3A-containing oligosaccharyl transferase (OST-A) complex. STT3A-containing complex assembly occurs through the formation of 3 subcomplexes. Subcomplex 1 contains RPN1 and TMEM258, subcomplex 2 contains the STT3A-specific subunits STT3A, DC2/OSTC, and KCP2 as well as the core subunit OST4, and subcomplex 3 contains RPN2, DAD1, and OST48. The OST-A complex can form stable complexes with the Sec61 complex or with both the Sec61 and TRAP complexes. Interacts with PSEN1 and NCSTN; indicative for an association with the gamma-secretase complex.

The protein resides in the endoplasmic reticulum. Its subcellular location is the membrane. It participates in protein modification; protein glycosylation. In terms of biological role, subunit of STT3A-containing oligosaccharyl transferase (OST-A) complex that catalyzes the initial transfer of a defined glycan (Glc(3)Man(9)GlcNAc(2) in eukaryotes) from the lipid carrier dolichol-pyrophosphate to an asparagine residue within an Asn-X-Ser/Thr consensus motif in nascent polypeptide chains, the first step in protein N-glycosylation. N-glycosylation occurs cotranslationally and the complex associates with the Sec61 complex at the channel-forming translocon complex that mediates protein translocation across the endoplasmic reticulum (ER). Within the OST-A complex, acts as an adapter that anchors the OST-A complex to the Sec61 complex. May be involved in N-glycosylation of APP (amyloid-beta precursor protein). Can modulate gamma-secretase cleavage of APP by enhancing endoprotelysis of PSEN1. This chain is Oligosaccharyltransferase complex subunit OSTC, found in Canis lupus familiaris (Dog).